The chain runs to 603 residues: Coiled-coil domain-containing protein 148 (603 aa).

Coiled coils occupy residues 365 to 429 (LAKD…KKKK) and 461 to 510 (EQSL…KQVA).

This is Coiled-coil domain-containing protein 148 (CCDC148) from Macaca fascicularis (Crab-eating macaque).